A 465-amino-acid chain; its full sequence is 23S rRNA (uracil(1939)-C(5))-methyltransferase RlmD (465 aa).

The interval 1–22 (MSEAVPTSARKSKNAPVAPGPA) is disordered. The TRAM domain occupies 16–80 (PVAPGPAPVL…PSYEQATVVD (65 aa)). Residues cysteine 93, cysteine 99, cysteine 102, and cysteine 181 each contribute to the [4Fe-4S] cluster site. The S-adenosyl-L-methionine site is built by glutamine 289, phenylalanine 318, asparagine 323, glutamate 339, asparagine 367, and aspartate 388. The active-site Nucleophile is the cysteine 421.

Belongs to the class I-like SAM-binding methyltransferase superfamily. RNA M5U methyltransferase family. RlmD subfamily.

The catalysed reaction is uridine(1939) in 23S rRNA + S-adenosyl-L-methionine = 5-methyluridine(1939) in 23S rRNA + S-adenosyl-L-homocysteine + H(+). Its function is as follows. Catalyzes the formation of 5-methyl-uridine at position 1939 (m5U1939) in 23S rRNA. The sequence is that of 23S rRNA (uracil(1939)-C(5))-methyltransferase RlmD from Burkholderia ambifaria (strain ATCC BAA-244 / DSM 16087 / CCUG 44356 / LMG 19182 / AMMD) (Burkholderia cepacia (strain AMMD)).